The following is a 73-amino-acid chain: Antimicrobial peptide 143 (73 aa).

The first 22 residues, 1 to 22, serve as a signal peptide directing secretion; it reads MKVKCLLAVFLIVLIAAEHCQA. Lys38 is subject to Lysine amide. Positions 44 to 73 are excised as a propeptide; the sequence is ELGTQFRPQQKNFMRREIDLERLFAEMPDY.

This sequence belongs to the non-disulfide-bridged peptide (NDBP) superfamily. Short antimicrobial peptide (group 4) family. As to expression, expressed by the venom gland.

The protein localises to the secreted. It is found in the target cell membrane. Cationic host defense peptide that have antibacterial activity by breaking membranes. Is more effective on Gram-positive than on Gram-negative bacteria. This is Antimicrobial peptide 143 from Lychas mucronatus (Chinese swimming scorpion).